We begin with the raw amino-acid sequence, 523 residues long: uncharacterized protein (523 aa).

Residues 193–447 enclose the Radical SAM core domain; it reads RKCSGCGNCR…ALKRRMIGKR (255 aa). [4Fe-4S] cluster is bound by residues Cys-212, Cys-220, and Cys-223.

The cofactor is [4Fe-4S] cluster.

This is an uncharacterized protein from Methanopyrus kandleri (strain AV19 / DSM 6324 / JCM 9639 / NBRC 100938).